Here is a 231-residue protein sequence, read N- to C-terminus: ATP-dependent dethiobiotin synthetase BioD (231 aa).

12–17 (DVGKTV) is an ATP binding site. Thr16 contacts Mg(2+). Lys37 is a catalytic residue. Residue Thr41 participates in substrate binding. ATP-binding positions include Asp50, 109-112 (EGAG), 170-171 (GS), and 200-202 (PAG). Residues Asp50 and Glu109 each contribute to the Mg(2+) site.

The protein belongs to the dethiobiotin synthetase family. In terms of assembly, homodimer. Requires Mg(2+) as cofactor.

Its subcellular location is the cytoplasm. The catalysed reaction is (7R,8S)-7,8-diammoniononanoate + CO2 + ATP = (4R,5S)-dethiobiotin + ADP + phosphate + 3 H(+). It participates in cofactor biosynthesis; biotin biosynthesis; biotin from 7,8-diaminononanoate: step 1/2. Functionally, catalyzes a mechanistically unusual reaction, the ATP-dependent insertion of CO2 between the N7 and N8 nitrogen atoms of 7,8-diaminopelargonic acid (DAPA, also called 7,8-diammoniononanoate) to form a ureido ring. The sequence is that of ATP-dependent dethiobiotin synthetase BioD from Rhodococcus jostii (strain RHA1).